Here is a 564-residue protein sequence, read N- to C-terminus: MFS-type efflux pump LUC4 (564 aa).

Positions 1 to 15 are enriched in polar residues; that stretch reads MGQSQDNTQLTTASP. A disordered region spans residues 1 to 35; the sequence is MGQSQDNTQLTTASPQAEKDLSSNDNPPESEPAAP. Transmembrane regions (helical) follow at residues 42–62, 78–98, 108–128, 141–161, and 170–190; these read WLVFIAIALTTFLAALDTSII, LYVWIVDSYLLASTATIPIFA, SLTLIAVCLFTLGSGLCGGAH, GVGGGGILTMSEIVVCDMVSV, and IIGGVWAIASVIAPIMGGAFA. N-linked (GlcNAc...) asparagine glycosylation occurs at Asn-192. The next 3 helical transmembrane spans lie at 197-217, 236-256, and 268-288; these read WIFYINLPIAGVVLVALIVFL, WGGSVLLIASVTAVVLALSWG, and LVPLILGLVGQLAFFAYQGAP. Asn-302 is a glycosylation site (N-linked (GlcNAc...) asparagine). 5 helical membrane-spanning segments follow: residues 308–328, 343–363, 371–391, 404–424, and 436–456; these read LFVISFVHSMLLFWVCYFLPV, VMLFPIATTSAPGGVIAGIFI, VWHFVGFALMSISCGLFTLLD, LLFGFGTGFVFTSCLPPILAS, and AWTFLRNFGSIWGIAIPAAAF. An N-linked (GlcNAc...) asparagine glycan is attached at Asn-461. A helical membrane pass occupies residues 512–532; it reads KLVWQVSIAFSVLGFVLAFLV.

It belongs to the major facilitator superfamily. TCR/Tet family.

The protein resides in the membrane. Functionally, MFS-type efflux pump; part of the gene cluster that mediates the biosynthesis of the mycotoxin lucilactaene and the lucilactaene-related compound NG-391 that act as cell cycle inhibitors with potent growth inhibitory activity against malarial parasites, moderate growth inhibitory activity against cancer cells, and no activity against bacteria and fungi. The polypeptide is MFS-type efflux pump LUC4 (Fusarium sp).